A 463-amino-acid chain; its full sequence is NEDD8-activating enzyme E1 catalytic subunit (463 aa).

Alanine 2 is subject to N-acetylalanine. The tract at residues 53–70 is interaction with UBE2M N-terminus; sequence HPDFEPSTESLQFLLDTC. Residues 100–124 and 148–171 contribute to the ATP site; these read DMDT…GRPK and IQDF…SIIA. Interaction with UBE2M N-terminus stretches follow at residues 157–161 and 192–217; these read RQFHI and PSSI…LPGM. Residues 227–229 are interaction with NEDD8; the sequence is LYP. Residue cysteine 237 is the Glycyl thioester intermediate of the active site. Interaction with NAE1 regions lie at residues 242 to 248 and 292 to 295; these read MPRLPEH and YNIR. An interaction with UBE2M N-terminus region spans residues 331-338; the sequence is IATSAYIP. The segment at 352–357 is interaction with NEDD8; it reads YTYTFE. The segment at 368 to 463 is interaction with UBE2M core domain; that stretch reads SQLPQNIQFS…TVLFKLHFTS (96 aa).

Belongs to the ubiquitin-activating E1 family. UBA3 subfamily. As to quaternary structure, heterodimer of UBA3 and NAE1. Interacts with NEDD8, UBE2F and UBE2M. Binds ESR1 and ESR2 with bound steroid ligand. Interacts with TBATA. In terms of tissue distribution, ubiquitously expressed.

It catalyses the reaction ATP + [NEDD8 protein] + [E1 NEDD8-activating enzyme]-L-cysteine = AMP + diphosphate + [E1 NEDD8-activating enzyme]-S-[NEDD8 protein]-yl-L-cysteine.. It participates in protein modification; protein neddylation. Binding of TP53BP2 to the regulatory subunit NAE1 decreases activity. Its function is as follows. Catalytic subunit of the dimeric UBA3-NAE1 E1 enzyme. E1 activates NEDD8 by first adenylating its C-terminal glycine residue with ATP, thereafter linking this residue to the side chain of the catalytic cysteine, yielding a NEDD8-UBA3 thioester and free AMP. E1 finally transfers NEDD8 to the catalytic cysteine of UBE2M. Down-regulates steroid receptor activity. Necessary for cell cycle progression. This chain is NEDD8-activating enzyme E1 catalytic subunit (UBA3), found in Homo sapiens (Human).